The sequence spans 481 residues: MRILQRALTFEDVLMVPRKSSVLPKDVSLKSRLTKNIGLNIPFISAAMDTVTEHKTAIAMARLGGIGIVHKNMDIQTQVKEITKVKKSESGVINDPIFIHAHRTLADAKVITDNYKISGVPVVDDKGLLIGILTNRDVRFETDLSKKVGDVMTKMPLVTAHVGISLDEASDLMHKHKIEKLPIVDKDNVLKGLITIKDIQKRIEYPEANKDDFGRLRVGAAIGVGQLDRAEMLVKAGVDALVLDSAHGHSANILHTLEEIKKSLVVDVIVGNVVTKEATSDLISAGADAVKVGIGPGSICTTRIVAGVGMPQVSAIDNCVEVASKFDIPVIADGGIRYSGDVAKALALGASSVMIGSLLAGTEESPGDFMIYQGRQYKSYRGMGSIGAMTKGSSDRYFQEGVASEKLVPEGIEGRVPYRGKVSDMIFQLVGGVRSSMGYQGAKNILELYQNAEFVEITSAGLKESHVHGVDITKEAPNYYG.

CBS domains follow at residues 92–148 (VIND…SKKV) and 152–209 (MTKM…PEAN). NAD(+) is bound by residues aspartate 244 and 293 to 295 (GIG). Residues glycine 295 and glycine 297 each coordinate K(+). Serine 298 is a binding site for IMP. Residue cysteine 300 coordinates K(+). Cysteine 300 serves as the catalytic Thioimidate intermediate. Residues 333-335 (DGG), 356-357 (GS), and 380-384 (YRGMG) contribute to the IMP site. Arginine 396 acts as the Proton acceptor in catalysis. Glutamate 410 contacts IMP. The K(+) site is built by glutamate 464, serine 465, and histidine 466.

The protein belongs to the IMPDH/GMPR family. In terms of assembly, homotetramer. It depends on K(+) as a cofactor.

The enzyme catalyses IMP + NAD(+) + H2O = XMP + NADH + H(+). Its pathway is purine metabolism; XMP biosynthesis via de novo pathway; XMP from IMP: step 1/1. Mycophenolic acid (MPA) is a non-competitive inhibitor that prevents formation of the closed enzyme conformation by binding to the same site as the amobile flap. In contrast, mizoribine monophosphate (MZP) is a competitive inhibitor that induces the closed conformation. MPA is a potent inhibitor of mammalian IMPDHs but a poor inhibitor of the bacterial enzymes. MZP is a more potent inhibitor of bacterial IMPDH. Its function is as follows. Catalyzes the conversion of inosine 5'-phosphate (IMP) to xanthosine 5'-phosphate (XMP), the first committed and rate-limiting step in the de novo synthesis of guanine nucleotides, and therefore plays an important role in the regulation of cell growth. This chain is Inosine-5'-monophosphate dehydrogenase, found in Helicobacter pylori (strain J99 / ATCC 700824) (Campylobacter pylori J99).